The sequence spans 187 residues: UPF0301 protein YqgE (187 aa).

It belongs to the UPF0301 (AlgH) family.

In Escherichia coli O127:H6 (strain E2348/69 / EPEC), this protein is UPF0301 protein YqgE.